The chain runs to 310 residues: Olfactory receptor 5H14 (310 aa).

Over 1–28 (MEEENATLLTEFVLTGFLYQPQWKIPLF) the chain is Extracellular. Asparagine 5 is a glycosylation site (N-linked (GlcNAc...) asparagine). The chain crosses the membrane as a helical span at residues 29 to 49 (LAFLVIYLITIMGNLGLIAVI). The Cytoplasmic portion of the chain corresponds to 50-56 (WKDPHLH). The helical transmembrane segment at 57–77 (IPMYLLLGNLAFVDALLSSSV) threads the bilayer. At 78–98 (TLKMLINFLAKSKMISLSECK) the chain is on the extracellular side. A disulfide bridge connects residues cysteine 97 and cysteine 179. The helical transmembrane segment at 99-119 (IQLFSFAISVTTECFLLATMA) threads the bilayer. The Cytoplasmic segment spans residues 120-143 (YDRYVAICKPLLYPAIMTNGLCIR). The chain crosses the membrane as a helical span at residues 144–164 (LLILSYVGGLLHALIHEGFLF). The Extracellular portion of the chain corresponds to 165 to 195 (RLTFCNSNIIQHFYCDIIPLLKISYTDSSIN). The helical transmembrane segment at 196 to 216 (FLMVFIFAGSIQVFTIGTVLI) threads the bilayer. The Cytoplasmic segment spans residues 217 to 240 (SYIFVLYTILKKKSVKGMRKAFST). A helical membrane pass occupies residues 241–261 (CGAHLLSVSLYYGPLAFMYMG). At 262–271 (SASPQADDQD) the chain is on the extracellular side. A helical membrane pass occupies residues 272–292 (MMESLFYTVIVPLLNPMIYSL). The Cytoplasmic portion of the chain corresponds to 293-310 (RNKQVIASFTKMFKRNDV).

It belongs to the G-protein coupled receptor 1 family.

The protein resides in the cell membrane. Odorant receptor. This Homo sapiens (Human) protein is Olfactory receptor 5H14 (OR5H14).